Here is a 427-residue protein sequence, read N- to C-terminus: Enolase (427 aa).

Residue Q163 coordinates (2R)-2-phosphoglycerate. Catalysis depends on E205, which acts as the Proton donor. Residues D242, E285, and D312 each contribute to the Mg(2+) site. 4 residues coordinate (2R)-2-phosphoglycerate: K337, R366, S367, and K388. Catalysis depends on K337, which acts as the Proton acceptor.

Belongs to the enolase family. Mg(2+) is required as a cofactor.

It is found in the cytoplasm. It localises to the secreted. The protein resides in the cell surface. It catalyses the reaction (2R)-2-phosphoglycerate = phosphoenolpyruvate + H2O. It functions in the pathway carbohydrate degradation; glycolysis; pyruvate from D-glyceraldehyde 3-phosphate: step 4/5. Functionally, catalyzes the reversible conversion of 2-phosphoglycerate (2-PG) into phosphoenolpyruvate (PEP). It is essential for the degradation of carbohydrates via glycolysis. This Bradyrhizobium sp. (strain ORS 278) protein is Enolase.